Here is an 879-residue protein sequence, read N- to C-terminus: JmjC domain-containing histone demethylation protein 1 (879 aa).

Disordered stretches follow at residues 1-45, 117-212, and 407-449; these read MSEQ…EEGK, STSP…PKRK, and KDVK…EGLK. The segment at 23-116 adopts a PHD-type zinc-finger fold; sequence PEPCPLCRET…KWYCAPCLAR (94 aa). 2 stretches are compositionally biased toward basic and acidic residues: residues 183–192 and 407–433; these read IDMKSEREQQ and KDVK…HLTE. Positions 416–598 constitute a JmjC domain; that stretch reads NDSRESSEIR…TQLRLRQIEI (183 aa). T472 contacts substrate. Residues H475 and D477 each coordinate Fe cation. Substrate is bound at residue K492. H566 is a binding site for Fe cation. Residues 763–879 are disordered; the sequence is HPPAWSENRQ…KVEEDMDIDH (117 aa). The span at 769-782 shows a compositional bias: polar residues; sequence ENRQSPQIETTTVQ. Low complexity predominate over residues 786 to 818; that stretch reads PSTSSSDAISGSGPGASPGASANGGANENEQAE. Residues 848 to 864 are compositionally biased toward basic and acidic residues; that stretch reads FVEKKTVWGPKLDKEKI.

It belongs to the JHDM1 histone demethylase family. Fe(2+) serves as cofactor.

It localises to the nucleus. The catalysed reaction is N(6),N(6)-dimethyl-L-lysyl(36)-[histone H3] + 2 2-oxoglutarate + 2 O2 = L-lysyl(36)-[histone H3] + 2 formaldehyde + 2 succinate + 2 CO2. Histone demethylase that specifically demethylates 'Lys-36' of histone H3, thereby playing a central role in histone code. The polypeptide is JmjC domain-containing histone demethylation protein 1 (JHD1) (Cryptococcus neoformans var. neoformans serotype D (strain B-3501A) (Filobasidiella neoformans)).